We begin with the raw amino-acid sequence, 57 residues long: uncharacterized protein (57 aa).

This is an uncharacterized protein from Haemophilus influenzae (strain ATCC 51907 / DSM 11121 / KW20 / Rd).